Here is a 318-residue protein sequence, read N- to C-terminus: Cytochrome f (318 aa).

The first 32 residues, Met1 to Ala32, serve as a signal peptide directing secretion. Heme contacts are provided by Tyr33, Cys53, Cys56, and His57. The chain crosses the membrane as a helical span at residues Ile284–Lys304.

The protein belongs to the cytochrome f family. The 4 large subunits of the cytochrome b6-f complex are cytochrome b6, subunit IV (17 kDa polypeptide, petD), cytochrome f and the Rieske protein, while the 4 small subunits are PetG, PetL, PetM and PetN. The complex functions as a dimer. Heme serves as cofactor.

The protein resides in the plastid. It localises to the chloroplast thylakoid membrane. Functionally, component of the cytochrome b6-f complex, which mediates electron transfer between photosystem II (PSII) and photosystem I (PSI), cyclic electron flow around PSI, and state transitions. This Angiopteris evecta (Mule's foot fern) protein is Cytochrome f.